Consider the following 334-residue polypeptide: MSLAAKITVLGAGSYGTALAICLARNGHKTLLWGRDDNHVAAMEQDRENNKYLADCPFPENLALEADLEKAVQASDNLLVVVPSHAFADMLKQIKPMLTENAKIAWATKGLDPQTGDLLQNVARTVLGDRVSLAVLSGPTFAKEMASGLPTAISLSSEDDEFVAELSDLLHCEKRFRVYSNKDFIGVQLGGAVKNVIAIAAGIADGIGFGANARTALITRGLAEMTRLGLALNAEPATFMGMAGLGDLVLTCTDNQSRNRRFGLALGQGKEVEQAITDIGQVVEGYRNTKEVYMLAQRHDVEMPIVEQVYQVLYRGKDAKLAAADLLSRDKKFE.

NADPH-binding residues include S14, Y15, R35, and K109. Sn-glycerol 3-phosphate-binding residues include K109, G138, and T140. A142 contacts NADPH. Sn-glycerol 3-phosphate-binding residues include K194, D247, S257, R258, and N259. K194 functions as the Proton acceptor in the catalytic mechanism. R258 contributes to the NADPH binding site. Positions 282 and 284 each coordinate NADPH.

It belongs to the NAD-dependent glycerol-3-phosphate dehydrogenase family.

The protein resides in the cytoplasm. The enzyme catalyses sn-glycerol 3-phosphate + NAD(+) = dihydroxyacetone phosphate + NADH + H(+). It carries out the reaction sn-glycerol 3-phosphate + NADP(+) = dihydroxyacetone phosphate + NADPH + H(+). It participates in membrane lipid metabolism; glycerophospholipid metabolism. In terms of biological role, catalyzes the reduction of the glycolytic intermediate dihydroxyacetone phosphate (DHAP) to sn-glycerol 3-phosphate (G3P), the key precursor for phospholipid synthesis. The polypeptide is Glycerol-3-phosphate dehydrogenase [NAD(P)+] (Colwellia psychrerythraea (strain 34H / ATCC BAA-681) (Vibrio psychroerythus)).